A 149-amino-acid chain; its full sequence is SKP1-like protein 14 (149 aa).

Residues 91-149 are interaction with the F-box domain of F-box proteins; sequence LLAANYLNIKGLLDLSAQTVADRIKDKTPEEIREIFNIENDFTPEEEAAVRKENAWAFE.

It belongs to the SKP1 family. Part of a SCF (SKP1-cullin-F-box) protein ligase complex. Interacts with CPR1/CPR30, At3g61590, At4g39550 and At5g49610. As to expression, restricted to inflorescences, pollen and leaves.

The protein resides in the nucleus. It participates in protein modification; protein ubiquitination. Functionally, involved in ubiquitination and subsequent proteasomal degradation of target proteins. Together with CUL1, RBX1 and a F-box protein, it forms a SCF E3 ubiquitin ligase complex. The functional specificity of this complex depends on the type of F-box protein. In the SCF complex, it serves as an adapter that links the F-box protein to CUL1. The chain is SKP1-like protein 14 (ASK14) from Arabidopsis thaliana (Mouse-ear cress).